Here is a 201-residue protein sequence, read N- to C-terminus: Potassium-transporting ATPase KdpC subunit (201 aa).

Residues 13–33 (IIFIIFTILCGGIYTIFITGI) traverse the membrane as a helical segment.

This sequence belongs to the KdpC family. In terms of assembly, the system is composed of three essential subunits: KdpA, KdpB and KdpC.

The protein localises to the cell membrane. In terms of biological role, part of the high-affinity ATP-driven potassium transport (or Kdp) system, which catalyzes the hydrolysis of ATP coupled with the electrogenic transport of potassium into the cytoplasm. This subunit acts as a catalytic chaperone that increases the ATP-binding affinity of the ATP-hydrolyzing subunit KdpB by the formation of a transient KdpB/KdpC/ATP ternary complex. The sequence is that of Potassium-transporting ATPase KdpC subunit from Clostridium botulinum (strain Alaska E43 / Type E3).